The primary structure comprises 503 residues: UDP-N-acetylmuramoylalanine--D-glutamate ligase (503 aa).

ATP is bound at residue 129–135; sequence GTNGKTT.

Belongs to the MurCDEF family.

The protein localises to the cytoplasm. It carries out the reaction UDP-N-acetyl-alpha-D-muramoyl-L-alanine + D-glutamate + ATP = UDP-N-acetyl-alpha-D-muramoyl-L-alanyl-D-glutamate + ADP + phosphate + H(+). It participates in cell wall biogenesis; peptidoglycan biosynthesis. In terms of biological role, cell wall formation. Catalyzes the addition of glutamate to the nucleotide precursor UDP-N-acetylmuramoyl-L-alanine (UMA). The protein is UDP-N-acetylmuramoylalanine--D-glutamate ligase of Burkholderia multivorans (strain ATCC 17616 / 249).